The sequence spans 200 residues: Small ribosomal subunit protein uS4 (200 aa).

An S4 RNA-binding domain is found at 92–155 (SRLDAVVYSL…QKLNIIVESV (64 aa)).

This sequence belongs to the universal ribosomal protein uS4 family. In terms of assembly, part of the 30S ribosomal subunit. Contacts protein S5. The interaction surface between S4 and S5 is involved in control of translational fidelity.

In terms of biological role, one of the primary rRNA binding proteins, it binds directly to 16S rRNA where it nucleates assembly of the body of the 30S subunit. With S5 and S12 plays an important role in translational accuracy. In Staphylococcus aureus (strain JH9), this protein is Small ribosomal subunit protein uS4.